Reading from the N-terminus, the 123-residue chain is Immunoglobulin lambda variable 5-39 (123 aa).

The first 19 residues, 1-19 (MAWTPLLLLLLSHCTGSLS), serve as a signal peptide directing secretion. Residues 20 to 44 (QPVLTQPTSLSASPGASARFTCTLR) form a framework-1 region. Residues 21–123 (PVLTQPTSLS…YCAIWYSSTS (103 aa)) form the Ig-like domain. Cys41 and Cys115 are oxidised to a cystine. A complementarity-determining-1 region spans residues 45 to 53 (SGINVGTYR). Residues 54–70 (IYWYQQKPGSLPRYLLR) are framework-2. The segment at 71–77 (YKSDSDK) is complementarity-determining-2. Residues 78-115 (QQGSGVPSRFSGSKDASTNAGLLLISGLQSEDEADYYC) are framework-3. Residues 116–123 (AIWYSSTS) form a complementarity-determining-3 region.

As to quaternary structure, immunoglobulins are composed of two identical heavy chains and two identical light chains; disulfide-linked.

The protein resides in the secreted. It is found in the cell membrane. Its function is as follows. V region of the variable domain of immunoglobulin light chains that participates in the antigen recognition. Immunoglobulins, also known as antibodies, are membrane-bound or secreted glycoproteins produced by B lymphocytes. In the recognition phase of humoral immunity, the membrane-bound immunoglobulins serve as receptors which, upon binding of a specific antigen, trigger the clonal expansion and differentiation of B lymphocytes into immunoglobulins-secreting plasma cells. Secreted immunoglobulins mediate the effector phase of humoral immunity, which results in the elimination of bound antigens. The antigen binding site is formed by the variable domain of one heavy chain, together with that of its associated light chain. Thus, each immunoglobulin has two antigen binding sites with remarkable affinity for a particular antigen. The variable domains are assembled by a process called V-(D)-J rearrangement and can then be subjected to somatic hypermutations which, after exposure to antigen and selection, allow affinity maturation for a particular antigen. This is Immunoglobulin lambda variable 5-39 from Homo sapiens (Human).